Consider the following 208-residue polypeptide: Uracil phosphoribosyltransferase (208 aa).

Residues R78, R103, and 130-138 (DPMLATGGT) contribute to the 5-phospho-alpha-D-ribose 1-diphosphate site. Uracil is bound by residues I193 and 198–200 (GDA). Position 199 (D199) interacts with 5-phospho-alpha-D-ribose 1-diphosphate.

It belongs to the UPRTase family. The cofactor is Mg(2+).

The enzyme catalyses UMP + diphosphate = 5-phospho-alpha-D-ribose 1-diphosphate + uracil. The protein operates within pyrimidine metabolism; UMP biosynthesis via salvage pathway; UMP from uracil: step 1/1. Allosterically activated by GTP. Catalyzes the conversion of uracil and 5-phospho-alpha-D-ribose 1-diphosphate (PRPP) to UMP and diphosphate. The chain is Uracil phosphoribosyltransferase from Desulforapulum autotrophicum (strain ATCC 43914 / DSM 3382 / VKM B-1955 / HRM2) (Desulfobacterium autotrophicum).